The sequence spans 438 residues: Aspartate--tRNA(Asp/Asn) ligase (438 aa).

Glu-176 is a binding site for L-aspartate. The segment at 198-201 (QLYK) is aspartate. Arg-220 is a binding site for L-aspartate. ATP contacts are provided by residues 220-222 (RAE), 228-230 (RHL), and Glu-361. 2 residues coordinate Mg(2+): Glu-361 and Ser-364. Positions 364 and 368 each coordinate L-aspartate. 409–412 (GADR) is a binding site for ATP.

It belongs to the class-II aminoacyl-tRNA synthetase family. Type 2 subfamily. Homodimer. Mg(2+) is required as a cofactor.

It localises to the cytoplasm. It catalyses the reaction tRNA(Asx) + L-aspartate + ATP = L-aspartyl-tRNA(Asx) + AMP + diphosphate. Aspartyl-tRNA synthetase with relaxed tRNA specificity since it is able to aspartylate not only its cognate tRNA(Asp) but also tRNA(Asn). Reaction proceeds in two steps: L-aspartate is first activated by ATP to form Asp-AMP and then transferred to the acceptor end of tRNA(Asp/Asn). This Methanococcus maripaludis (strain DSM 14266 / JCM 13030 / NBRC 101832 / S2 / LL) protein is Aspartate--tRNA(Asp/Asn) ligase.